The following is a 260-amino-acid chain: 23S rRNA (guanosine-2'-O-)-methyltransferase RlmB (260 aa).

3 residues coordinate S-adenosyl-L-methionine: Gly197, Ile217, and Leu226.

This sequence belongs to the class IV-like SAM-binding methyltransferase superfamily. RNA methyltransferase TrmH family. RlmB subfamily.

The protein localises to the cytoplasm. It carries out the reaction guanosine(2251) in 23S rRNA + S-adenosyl-L-methionine = 2'-O-methylguanosine(2251) in 23S rRNA + S-adenosyl-L-homocysteine + H(+). Specifically methylates the ribose of guanosine 2251 in 23S rRNA. In Nitrosomonas europaea (strain ATCC 19718 / CIP 103999 / KCTC 2705 / NBRC 14298), this protein is 23S rRNA (guanosine-2'-O-)-methyltransferase RlmB.